We begin with the raw amino-acid sequence, 103 residues long: CLAVATA3/ESR (CLE)-related protein 22 (103 aa).

The signal sequence occupies residues 1 to 34 (MGNYYSRRKSRKHITTVALIILLLLLFLFLYAKA). The interval 37–103 (SSPNIHHHST…FTGPNPLHNR (67 aa)) is disordered. Basic residues predominate over residues 41 to 50 (IHHHSTHGSL). Over residues 66-76 (NAASSRGSKYT) the composition is skewed to polar residues. P97 carries the post-translational modification Hydroxyproline. O-linked (Ara...) hydroxyproline glycosylation is present at P97.

This sequence belongs to the CLV3/ESR signal peptide family. Post-translationally, the O-glycosylation (arabinosylation) of the hydroxyproline Pro-97 enhances binding affinity of the CLE22p peptide for its receptor. Mostly expressed in stems and apex, and, to a lower extent, in seedlings, leaves, flowers and siliques.

The protein localises to the secreted. It localises to the extracellular space. Functionally, extracellular signal peptide that regulates cell fate. Represses root apical meristem maintenance. The sequence is that of CLAVATA3/ESR (CLE)-related protein 22 from Arabidopsis thaliana (Mouse-ear cress).